Reading from the N-terminus, the 24-residue chain is Brevinin-1Pe (24 aa).

C18 and C24 are disulfide-bonded.

In terms of tissue distribution, expressed by the skin glands.

It is found in the secreted. Functionally, antibacterial activity against Gram-positive bacterium S.aureus and Gram-negative bacterium E.coli. Has activity against C.albicans. This Lithobates pipiens (Northern leopard frog) protein is Brevinin-1Pe.